The following is a 433-amino-acid chain: 4-hydroxy-3-methylbut-2-en-1-yl diphosphate synthase (flavodoxin) (433 aa).

The segment covering 1-13 (MNKPETVTENSLA) has biased composition (polar residues). The tract at residues 1-23 (MNKPETVTENSLASDVAGPAPRH) is disordered. 4 residues coordinate [4Fe-4S] cluster: C314, C317, C360, and E367.

Belongs to the IspG family. Requires [4Fe-4S] cluster as cofactor.

It carries out the reaction (2E)-4-hydroxy-3-methylbut-2-enyl diphosphate + oxidized [flavodoxin] + H2O + 2 H(+) = 2-C-methyl-D-erythritol 2,4-cyclic diphosphate + reduced [flavodoxin]. It functions in the pathway isoprenoid biosynthesis; isopentenyl diphosphate biosynthesis via DXP pathway; isopentenyl diphosphate from 1-deoxy-D-xylulose 5-phosphate: step 5/6. In terms of biological role, converts 2C-methyl-D-erythritol 2,4-cyclodiphosphate (ME-2,4cPP) into 1-hydroxy-2-methyl-2-(E)-butenyl 4-diphosphate. The sequence is that of 4-hydroxy-3-methylbut-2-en-1-yl diphosphate synthase (flavodoxin) from Bradyrhizobium sp. (strain ORS 278).